Consider the following 262-residue polypeptide: uncharacterized protein (262 aa).

A Radical SAM core domain is found at 1–211; sequence MAFHVMIIPS…LLYLLDSYLE (211 aa). [4Fe-4S] cluster is bound by residues C13, C17, and C20.

It belongs to the radical SAM superfamily. Anaerobic sulfatase-maturating enzyme family. Requires [4Fe-4S] cluster as cofactor.

This is an uncharacterized protein from Methanothermobacter thermautotrophicus (strain ATCC 29096 / DSM 1053 / JCM 10044 / NBRC 100330 / Delta H) (Methanobacterium thermoautotrophicum).